The following is a 310-amino-acid chain: Mitogen-activated protein kinase kinase 9 (310 aa).

Residues 47-306 (LEKLNVLGCG…APQLLAHPFL (260 aa)) enclose the Protein kinase domain. ATP contacts are provided by residues 53–61 (LGCGNGGIV) and K76. The Proton acceptor role is filled by D167. A phosphoserine mark is found at S195 and S201. At T205 the chain carries Phosphothreonine.

This sequence belongs to the protein kinase superfamily. STE Ser/Thr protein kinase family. MAP kinase kinase subfamily. In terms of processing, phosphorylation at Ser-195 and Ser-201 by MAP kinase kinase kinases positively regulates kinase activity. Autophosphorylated.

It localises to the cytoplasm. Its subcellular location is the nucleus. It catalyses the reaction L-seryl-[protein] + ATP = O-phospho-L-seryl-[protein] + ADP + H(+). The catalysed reaction is L-threonyl-[protein] + ATP = O-phospho-L-threonyl-[protein] + ADP + H(+). It carries out the reaction L-tyrosyl-[protein] + ATP = O-phospho-L-tyrosyl-[protein] + ADP + H(+). Its function is as follows. MKK9-MPK3/MPK6 module phosphorylates and activates EIN3, leading to the promotion of EIN3-mediated transcription in ethylene signaling. Autophosphorylates and also phosphorylates MPK3 and MPK6. Plays an important role in ethylene and camalexin biosynthesis and in salt stress response. MKK9-MPK6 module positively regulates leaf senescence. The polypeptide is Mitogen-activated protein kinase kinase 9 (MKK9) (Arabidopsis thaliana (Mouse-ear cress)).